Here is a 369-residue protein sequence, read N- to C-terminus: 2-aminoethylphosphonate--pyruvate transaminase (369 aa).

N6-(pyridoxal phosphate)lysine is present on K193.

This sequence belongs to the class-V pyridoxal-phosphate-dependent aminotransferase family. PhnW subfamily. In terms of assembly, homodimer. Requires pyridoxal 5'-phosphate as cofactor.

The catalysed reaction is (2-aminoethyl)phosphonate + pyruvate = phosphonoacetaldehyde + L-alanine. Involved in phosphonate degradation. The polypeptide is 2-aminoethylphosphonate--pyruvate transaminase (Burkholderia thailandensis (strain ATCC 700388 / DSM 13276 / CCUG 48851 / CIP 106301 / E264)).